A 1225-amino-acid polypeptide reads, in one-letter code: Cohesin subunit SA-3 (1225 aa).

The tract at residues 1-97 is disordered; that stretch reads MSSPLQRAVG…HSRKQSEPPA (97 aa). The segment covering 15–26 has biased composition (low complexity); that stretch reads ALSASSSSSASL. The segment covering 45–54 has biased composition (acidic residues); the sequence is LADEDTDFED. Basic residues-rich tracts occupy residues 59–69 and 76–90; these read NVKKRAAKRPP and KHPKKGSRVVHRHSR. The region spanning 309–394 is the SCD domain; it reads FVHRYRDVLP…SRFKDRMVSM (86 aa). 3 disordered regions span residues 546-567, 1063-1113, and 1177-1225; these read SEGHPPVGRVTGRKGLTSKERK, AETS…STAV, and EEDE…IEDF. Residues 1078 to 1089 show a composition bias toward basic and acidic residues; that stretch reads VEGPAKPNREDV. Positions 1090 to 1099 are enriched in low complexity; sequence SSSQEESLQL. The segment covering 1177-1191 has biased composition (acidic residues); the sequence is EEDEEEELEIQDESN. Over residues 1198–1209 the composition is skewed to polar residues; it reads DMQASSYSSTSE. A Phosphoserine modification is found at S1203. A compositionally biased stretch (acidic residues) spans 1216-1225; sequence DSTELDIEDF.

The protein belongs to the SCC3 family. In terms of assembly, component of the meiosis-specific cohesin complex, which also contains the SMC1 (SMC1A or SMC1B) and SMC3 heterodimer. Such complex likely contains RAD21, or the meiosis-specific related protein REC8. Interacts with CCDC79/TERB1; recruiting cohesin to telomeres to develop structural rigidity. In terms of processing, phosphorylated. Testis specific.

It is found in the nucleus. It localises to the chromosome. The protein localises to the centromere. In terms of biological role, meiosis specific component of cohesin complex. The cohesin complex is required for the cohesion of sister chromatids after DNA replication. The cohesin complex apparently forms a large proteinaceous ring within which sister chromatids can be trapped. At anaphase, the complex is cleaved and dissociates from chromatin, allowing sister chromatids to segregate. The meiosis-specific cohesin complex probably replaces mitosis specific cohesin complex when it dissociates from chromatin during prophase I. The sequence is that of Cohesin subunit SA-3 (STAG3) from Homo sapiens (Human).